We begin with the raw amino-acid sequence, 181 residues long: Inner membrane-spanning protein YciB (181 aa).

The next 5 helical transmembrane spans lie at 8–28 (FPII…ATAA), 53–73 (ITLI…NAIF), 76–96 (WKPT…HFFG), 121–141 (LSWA…VYNF), and 149–169 (FKLF…AFYI).

This sequence belongs to the YciB family.

Its subcellular location is the cell inner membrane. Its function is as follows. Plays a role in cell envelope biogenesis, maintenance of cell envelope integrity and membrane homeostasis. The chain is Inner membrane-spanning protein YciB from Coxiella burnetii (strain CbuG_Q212) (Coxiella burnetii (strain Q212)).